The following is a 239-amino-acid chain: Ribose-5-phosphate isomerase A (239 aa).

Residues 31-34 (FGST), 88-91 (DGAD), and 101-104 (KGGG) contribute to the substrate site. Glutamate 110 (proton acceptor) is an active-site residue. Lysine 128 lines the substrate pocket.

The protein belongs to the ribose 5-phosphate isomerase family. In terms of assembly, homodimer.

The enzyme catalyses aldehydo-D-ribose 5-phosphate = D-ribulose 5-phosphate. Its pathway is carbohydrate degradation; pentose phosphate pathway; D-ribose 5-phosphate from D-ribulose 5-phosphate (non-oxidative stage): step 1/1. In terms of biological role, catalyzes the reversible conversion of ribose-5-phosphate to ribulose 5-phosphate. The chain is Ribose-5-phosphate isomerase A from Chloroflexus aurantiacus (strain ATCC 29366 / DSM 635 / J-10-fl).